A 348-amino-acid polypeptide reads, in one-letter code: Ion-translocating oxidoreductase complex subunit D (348 aa).

Helical transmembrane passes span 20–39 (LMKW…TYFF), 72–91 (ALRD…AIPP), and 120–140 (PFNP…VQMT). At T187 the chain carries FMN phosphoryl threonine. Transmembrane regions (helical) follow at residues 214 to 234 (LAGV…LVLI), 241 to 261 (WHIP…FLMF), 266 to 286 (TASP…FFIA), 300 to 320 (LVFG…GGFP), and 321 to 341 (DGVA…DYYT).

The protein belongs to the NqrB/RnfD family. As to quaternary structure, the complex is composed of six subunits: RnfA, RnfB, RnfC, RnfD, RnfE and RnfG. The cofactor is FMN.

The protein localises to the cell inner membrane. Functionally, part of a membrane-bound complex that couples electron transfer with translocation of ions across the membrane. The sequence is that of Ion-translocating oxidoreductase complex subunit D from Vibrio atlanticus (strain LGP32) (Vibrio splendidus (strain Mel32)).